Reading from the N-terminus, the 179-residue chain is Large ribosomal subunit protein bL17 (179 aa).

Residues arginine 123–arginine 179 form a disordered region. Positions alanine 154–proline 168 are enriched in low complexity. The segment covering glutamate 170–arginine 179 has biased composition (polar residues).

The protein belongs to the bacterial ribosomal protein bL17 family. As to quaternary structure, part of the 50S ribosomal subunit. Contacts protein L32.

This chain is Large ribosomal subunit protein bL17, found in Tropheryma whipplei (strain Twist) (Whipple's bacillus).